The sequence spans 220 residues: Protein-L-isoaspartate O-methyltransferase (220 aa).

S68 is an active-site residue.

The protein belongs to the methyltransferase superfamily. L-isoaspartyl/D-aspartyl protein methyltransferase family.

The protein localises to the cytoplasm. The catalysed reaction is [protein]-L-isoaspartate + S-adenosyl-L-methionine = [protein]-L-isoaspartate alpha-methyl ester + S-adenosyl-L-homocysteine. In terms of biological role, catalyzes the methyl esterification of L-isoaspartyl residues in peptides and proteins that result from spontaneous decomposition of normal L-aspartyl and L-asparaginyl residues. It plays a role in the repair and/or degradation of damaged proteins. The protein is Protein-L-isoaspartate O-methyltransferase of Dictyoglomus thermophilum (strain ATCC 35947 / DSM 3960 / H-6-12).